Reading from the N-terminus, the 396-residue chain is Elongation factor Tu 1 (396 aa).

The region spanning 10–206 (KPHVNVGTIG…ALDTYIPTPE (197 aa)) is the tr-type G domain. Residues 19-26 (GHVDHGKT) form a G1 region. Position 19–26 (19–26 (GHVDHGKT)) interacts with GTP. Thr-26 provides a ligand contact to Mg(2+). A G2 region spans residues 60–64 (GITIN). Positions 81-84 (DCPG) are G3. GTP-binding positions include 81–85 (DCPGH) and 136–139 (NKAD). Residues 136–139 (NKAD) form a G4 region. A G5 region spans residues 174 to 176 (SAK).

Belongs to the TRAFAC class translation factor GTPase superfamily. Classic translation factor GTPase family. EF-Tu/EF-1A subfamily. In terms of assembly, monomer.

Its subcellular location is the cytoplasm. It catalyses the reaction GTP + H2O = GDP + phosphate + H(+). Its function is as follows. GTP hydrolase that promotes the GTP-dependent binding of aminoacyl-tRNA to the A-site of ribosomes during protein biosynthesis. The protein is Elongation factor Tu 1 of Methylobacillus flagellatus (strain ATCC 51484 / DSM 6875 / VKM B-1610 / KT).